Here is a 297-residue protein sequence, read N- to C-terminus: Large ribosomal subunit protein uL18 (297 aa).

Belongs to the universal ribosomal protein uL18 family. As to quaternary structure, component of the large ribosomal subunit (LSU).

It localises to the cytoplasm. It is found in the nucleus. In terms of biological role, component of the ribosome, a large ribonucleoprotein complex responsible for the synthesis of proteins in the cell. The small ribosomal subunit (SSU) binds messenger RNAs (mRNAs) and translates the encoded message by selecting cognate aminoacyl-transfer RNA (tRNA) molecules. The large subunit (LSU) contains the ribosomal catalytic site termed the peptidyl transferase center (PTC), which catalyzes the formation of peptide bonds, thereby polymerizing the amino acids delivered by tRNAs into a polypeptide chain. The nascent polypeptides leave the ribosome through a tunnel in the LSU and interact with protein factors that function in enzymatic processing, targeting, and the membrane insertion of nascent chains at the exit of the ribosomal tunnel. This Aedes aegypti (Yellowfever mosquito) protein is Large ribosomal subunit protein uL18 (RpL5).